A 166-amino-acid polypeptide reads, in one-letter code: MLRGVLGKAFRLAGYTIQYGCIAHCAFEYVGGVVMCSGPSMEPTIQNSDIVFAENLSRHFYGIQRGDIVIAKSPSDPKSNICKRVIGLEGDKILSTSPSDVFKSRSYVPTGHVWLEGDNLQNSTDSRYYGPIPYGLIRGRIFFKIWPFSDFGFLRDSPNGQRFSDD.

Residues Ser40 and Lys83 contribute to the active site.

This sequence belongs to the peptidase S26 family. IMP1 subfamily. In terms of assembly, heterodimer of 2 subunits, IMMPL1 and IMMPL2.

Its subcellular location is the mitochondrion inner membrane. Catalyzes the removal of transit peptides required for the targeting of proteins from the mitochondrial matrix, across the inner membrane, into the inter-membrane space. Known to process the nuclear encoded protein DIABLO. In Mus musculus (Mouse), this protein is Mitochondrial inner membrane protease subunit 1 (Immp1l).